The primary structure comprises 174 residues: Peptide deformylase (174 aa).

Fe cation-binding residues include C96 and H138. E139 is an active-site residue. H142 is a Fe cation binding site.

This sequence belongs to the polypeptide deformylase family. Fe(2+) is required as a cofactor.

The enzyme catalyses N-terminal N-formyl-L-methionyl-[peptide] + H2O = N-terminal L-methionyl-[peptide] + formate. In terms of biological role, removes the formyl group from the N-terminal Met of newly synthesized proteins. Requires at least a dipeptide for an efficient rate of reaction. N-terminal L-methionine is a prerequisite for activity but the enzyme has broad specificity at other positions. The chain is Peptide deformylase from Helicobacter pylori (strain HPAG1).